The sequence spans 386 residues: 5-hydroxytryptamine receptor 1B (386 aa).

The interval 1–25 (MEEPGARCAPPPPAGSQTQTPSSNL) is disordered. The Extracellular segment spans residues 1–42 (MEEPGARCAPPPPAGSQTQTPSSNLSHNCSADSYIYQDSIAL). The span at 16-25 (SQTQTPSSNL) shows a compositional bias: polar residues. Residues Asn24 and Asn28 are each glycosylated (N-linked (GlcNAc...) asparagine). A helical membrane pass occupies residues 43–68 (PWKVLLVALLALITLATTLSNAFVIA). Residues 69-82 (TVYRTRKLHTPANY) are Cytoplasmic-facing. A helical transmembrane segment spans residues 83–107 (LIASLAVTDLLVSILVMPISTMYTV). Residues 108–115 (TGRWTLGQ) lie on the Extracellular side of the membrane. Residues 116–141 (VVCDFWLSSDITCCTASIMHLCVIAL) form a helical membrane-spanning segment. A disulfide bridge links Cys118 with Cys195. Ergotamine contacts are provided by Asp125 and Thr130. The DRY motif; important for ligand-induced conformation changes and signaling motif lies at 142–144 (DRY). The Cytoplasmic portion of the chain corresponds to 142-161 (DRYWAITDAVEYSAKRTPRR). The helical transmembrane segment at 162 to 180 (AAVMIALVWVFSISISLPR) threads the bilayer. Over 181–201 (FFWRQAKAEEEVLDCLVNTDH) the chain is Extracellular. Residue Val197 participates in ergotamine binding. The chain crosses the membrane as a helical span at residues 202 to 225 (VLYTVYSTVGAFYLPTLLLIALYG). The Cytoplasmic portion of the chain corresponds to 226–311 (RIYVEARSRI…AARERKATKT (86 aa)). Residues 253–272 (ISDSPGSTSSVTSINSRVPD) form a disordered region. Residues 254–268 (SDSPGSTSSVTSINS) are compositionally biased toward low complexity. The chain crosses the membrane as a helical span at residues 312-333 (LGIILGAFIVCWLPFFIISLVM). At 334–343 (PICKDACWFH) the chain is on the extracellular side. A helical membrane pass occupies residues 344-366 (MAIFDFFNWLGYLNSLINPIIYT). Positions 361–365 (NPIIY) match the NPxxY motif; important for ligand-induced conformation changes and signaling motif. At 367–386 (MPNEDFKQAFHKLIRFKCTG) the chain is on the cytoplasmic side. Cys384 carries S-palmitoyl cysteine lipidation.

It belongs to the G-protein coupled receptor 1 family. In terms of assembly, homodimer. Heterodimer with HTR1D. In terms of processing, phosphorylated. Desensitization of the receptor may be mediated by its phosphorylation. Post-translationally, palmitoylated.

The protein localises to the cell membrane. Functionally, G-protein coupled receptor for 5-hydroxytryptamine (serotonin). Also functions as a receptor for ergot alkaloid derivatives, various anxiolytic and antidepressant drugs and other psychoactive substances, such as lysergic acid diethylamide (LSD). Ligand binding causes a conformation change that triggers signaling via guanine nucleotide-binding proteins (G proteins) and modulates the activity of downstream effectors, such as adenylate cyclase. HTR1B is coupled to G(i)/G(o) G alpha proteins and mediates inhibitory neurotransmission by inhibiting adenylate cyclase activity. Arrestin family members inhibit signaling via G proteins and mediate activation of alternative signaling pathways. Regulates the release of 5-hydroxytryptamine, dopamine and acetylcholine in the brain, and thereby affects neural activity, nociceptive processing, pain perception, mood and behavior. Besides, plays a role in vasoconstriction of cerebral arteries. This chain is 5-hydroxytryptamine receptor 1B (HTR1B), found in Spalax ehrenbergi (Middle East blind mole rat).